The following is a 335-amino-acid chain: Succinylglutamate desuccinylase (335 aa).

Zn(2+) is bound by residues H59, E62, and H151. E215 is an active-site residue.

This sequence belongs to the AspA/AstE family. Succinylglutamate desuccinylase subfamily. The cofactor is Zn(2+).

It carries out the reaction N-succinyl-L-glutamate + H2O = L-glutamate + succinate. The protein operates within amino-acid degradation; L-arginine degradation via AST pathway; L-glutamate and succinate from L-arginine: step 5/5. Its function is as follows. Transforms N(2)-succinylglutamate into succinate and glutamate. The polypeptide is Succinylglutamate desuccinylase (Pseudomonas syringae pv. tomato (strain ATCC BAA-871 / DC3000)).